Here is a 498-residue protein sequence, read N- to C-terminus: ATP synthase subunit beta, chloroplastic (498 aa).

Residue 172-179 (GGAGVGKT) coordinates ATP.

It belongs to the ATPase alpha/beta chains family. F-type ATPases have 2 components, CF(1) - the catalytic core - and CF(0) - the membrane proton channel. CF(1) has five subunits: alpha(3), beta(3), gamma(1), delta(1), epsilon(1). CF(0) has four main subunits: a(1), b(1), b'(1) and c(9-12).

The protein localises to the plastid. The protein resides in the chloroplast thylakoid membrane. The catalysed reaction is ATP + H2O + 4 H(+)(in) = ADP + phosphate + 5 H(+)(out). Its function is as follows. Produces ATP from ADP in the presence of a proton gradient across the membrane. The catalytic sites are hosted primarily by the beta subunits. The polypeptide is ATP synthase subunit beta, chloroplastic (Helianthus annuus (Common sunflower)).